A 412-amino-acid chain; its full sequence is DNA polymerase IV (412 aa).

The UmuC domain occupies 12–193 (ILHVDMNCFF…LPVGAMHGIG (182 aa)). Mg(2+) contacts are provided by D16 and D112. Residue E113 is part of the active site. Residues 235–257 (KGMDDREVDPSQMGQHKSVGNSM) form a disordered region. Positions 246-257 (QMGQHKSVGNSM) are enriched in polar residues.

Belongs to the DNA polymerase type-Y family. As to quaternary structure, monomer. It depends on Mg(2+) as a cofactor.

It is found in the cytoplasm. It catalyses the reaction DNA(n) + a 2'-deoxyribonucleoside 5'-triphosphate = DNA(n+1) + diphosphate. Functionally, poorly processive, error-prone DNA polymerase involved in untargeted mutagenesis. Copies undamaged DNA at stalled replication forks, which arise in vivo from mismatched or misaligned primer ends. These misaligned primers can be extended by PolIV. Exhibits no 3'-5' exonuclease (proofreading) activity. May be involved in translesional synthesis, in conjunction with the beta clamp from PolIII. The chain is DNA polymerase IV from Bacillus anthracis.